We begin with the raw amino-acid sequence, 110 residues long: DNA-binding protein Mlab_1482 (110 aa).

Belongs to the PDCD5 family.

This is DNA-binding protein Mlab_1482 from Methanocorpusculum labreanum (strain ATCC 43576 / DSM 4855 / Z).